The primary structure comprises 274 residues: Peroxiredoxin-4 (274 aa).

The first 40 residues, 1–40 (MEARSKLLDGTTASRRWTRKLVLLLPPLLLFLLRTESLQG), serve as a signal peptide directing secretion. Residues 82–240 (AKISKPAPYW…TLRLVQAFQY (159 aa)) form the Thioredoxin domain. The Cysteine sulfenic acid (-SOH) intermediate role is filled by Cys127.

Belongs to the peroxiredoxin family. AhpC/Prx1 subfamily. As to quaternary structure, homodimer; disulfide-linked, upon oxidation. 5 homodimers assemble to form a ring-like decamer. Post-translationally, the enzyme can be inactivated by further oxidation of the cysteine sulfenic acid (C(P)-SOH) to sulphinic acid (C(P)-SO2H) and sulphonic acid (C(P)-SO3H) instead of its condensation to a disulfide bond.

The protein resides in the cytoplasm. Its subcellular location is the endoplasmic reticulum. It carries out the reaction a hydroperoxide + [thioredoxin]-dithiol = an alcohol + [thioredoxin]-disulfide + H2O. Thiol-specific peroxidase that catalyzes the reduction of hydrogen peroxide and organic hydroperoxides to water and alcohols, respectively. Plays a role in cell protection against oxidative stress by detoxifying peroxides and as sensor of hydrogen peroxide-mediated signaling events. Regulates the activation of NF-kappa-B in the cytosol by a modulation of I-kappa-B-alpha phosphorylation. In Mus musculus (Mouse), this protein is Peroxiredoxin-4 (Prdx4).